The chain runs to 1197 residues: Protein timeless homolog (1197 aa).

The segment at 1-309 (MDLYMMNCEL…GLHNLQNYSS (309 aa)) is required for homodimerization and for interaction with CRY1 and CHEK1. The residue at position 281 (Ser-281) is a Phosphoserine. Disordered regions lie at residues 647-674 (STPLPRQQEPEEGDAEEEEEEEEEEELQ) and 943-1002 (RKKL…SAEN). The segment covering 656 to 673 (PEEGDAEEEEEEEEEEEL) has biased composition (acidic residues). Positions 810 to 949 (SHRAPLWSPE…KKRRKKLAPS (140 aa)) are DNA-binding domain. Over residues 963–985 (QEDPEEEDEHLPEDESEDEESEE) the composition is skewed to acidic residues. Positions 986–999 (GLPSGQGQGSSSLS) are enriched in low complexity. An interaction with PARP1 region spans residues 997-1095 (SLSAENLGES…TQLRRVAASL (99 aa)). Residues Ser-1071 and Ser-1084 each carry the phosphoserine modification. The interval 1079–1197 (IPAKLSSTQL…KRFQIEDEDD (119 aa)) is required for nuclear localization. Thr-1086 bears the Phosphothreonine mark. The segment at 1088–1197 (LRRVAASLSQ…KRFQIEDEDD (110 aa)) is disordered. Acidic residues-rich tracts occupy residues 1099-1109 (ENEEEREEEPE) and 1143-1153 (TEEEATGEEEW). Ser-1165 carries the phosphoserine modification.

This sequence belongs to the timeless family. As to quaternary structure, monomer. Homodimer or homomultimer. Component of the circadian core oscillator, which includes the CRY proteins, CLOCK or NPAS2, ARTNL/BMAL1 or ARTNL2/BMAL2, CSKN1D and/or CSNK1E, TIMELESS, and the PER proteins. Interacts directly with PER2; the interaction with PER2 is via its second PAS domain. Interacts directly with PER1 and PER3. Interacts with CRY1. Interacts with CRY2. Interacts with CHEK1, ATR and ATRIP. Interacts with CLSPN. Interacts (via N-terminus) with TIPIN. The TIMELESS-TIPIN heterodimer binds preferably to guanine-rich quadruplex-forming (G4) DNA structures. Associates with the MCM2-7 complex. Interacts with DNA polymerases alpha, delta and epsilon. Interacts with DDX11; this interaction increases recruitment of both proteins onto chromatin in response to replication stress induction by hydroxyurea. Interacts with PARP1; interaction is direct and independent of poly-ADP-ribose. Predominantly and robustly expressed in proliferative organs (spleen, thymus, intestine and testis) compared to those more differentiated such as kidney and liver (at protein level). Expressed in all tissues examined including brain, heart, lung, liver, skeletal muscle, kidney, placenta, pancreas, spleen, thymus and testis. Strongly expressed in the suprachiasmatic nucleus (SCN) and pars tuberalis, moderately in the cingulate cortex, pyrimidal cell layer of the piriform cortex, periventricular part of the caudate putamen, and granular layer of the cerebellum, and weakly in the cerebral cortex, gyrus dentatus, hippocampus and thalamic nuclei. In embryonic kidney, expression is highest in regions of active ureteric bud cell branching.

The protein localises to the nucleus. The protein resides in the chromosome. Its function is as follows. Plays an important role in the control of DNA replication, maintenance of replication fork stability, maintenance of genome stability throughout normal DNA replication, DNA repair and in the regulation of the circadian clock. Required to stabilize replication forks during DNA replication by forming a complex with TIPIN: this complex regulates DNA replication processes under both normal and stress conditions, stabilizes replication forks and influences both CHEK1 phosphorylation and the intra-S phase checkpoint in response to genotoxic stress. During DNA replication, inhibits the CMG complex ATPase activity and activates DNA polymerases catalytic activities, coupling DNA unwinding and DNA synthesis. TIMELESS promotes TIPIN nuclear localization. Plays a role in maintaining processive DNA replication past genomic guanine-rich DNA sequences that form G-quadruplex (G4) structures, possibly together with DDX1. Involved in cell survival after DNA damage or replication stress by promoting DNA repair. In response to double-strand breaks (DSBs), accumulates at DNA damage sites and promotes homologous recombination repair via its interaction with PARP1. May be specifically required for the ATR-CHEK1 pathway in the replication checkpoint induced by hydroxyurea or ultraviolet light. Involved in the determination of period length and in the DNA damage-dependent phase advancing of the circadian clock. Negatively regulates CLOCK|NPAS2-ARTNL/BMAL1|ARTNL2/BMAL2-induced transactivation of PER1 possibly via translocation of PER1 into the nucleus. May also play an important role in epithelial cell morphogenesis and formation of branching tubules. The sequence is that of Protein timeless homolog from Mus musculus (Mouse).